The following is a 303-amino-acid chain: Signal recognition particle receptor FtsY (303 aa).

GTP contacts are provided by residues 108–115 (GVNGAGKT), 190–194 (DTAGR), and 254–257 (TKLD).

This sequence belongs to the GTP-binding SRP family. FtsY subfamily. Part of the signal recognition particle protein translocation system, which is composed of SRP and FtsY. SRP is a ribonucleoprotein composed of Ffh and a 4.5S RNA molecule.

Its subcellular location is the cell inner membrane. It localises to the cytoplasm. It catalyses the reaction GTP + H2O = GDP + phosphate + H(+). Involved in targeting and insertion of nascent membrane proteins into the cytoplasmic membrane. Acts as a receptor for the complex formed by the signal recognition particle (SRP) and the ribosome-nascent chain (RNC). Interaction with SRP-RNC leads to the transfer of the RNC complex to the Sec translocase for insertion into the membrane, the hydrolysis of GTP by both Ffh and FtsY, and the dissociation of the SRP-FtsY complex into the individual components. The protein is Signal recognition particle receptor FtsY of Rickettsia bellii (strain RML369-C).